Here is a 458-residue protein sequence, read N- to C-terminus: tRNA-2-methylthio-N(6)-dimethylallyladenosine synthase (458 aa).

In terms of domain architecture, MTTase N-terminal spans 15–134; the sequence is KKVFIKTYGC…LPELLEKAKQ (120 aa). Residues Cys24, Cys60, Cys97, Cys175, Cys179, and Cys182 each contribute to the [4Fe-4S] cluster site. Residues 161–395 enclose the Radical SAM core domain; that stretch reads RKRGVSAFLT…LLLEQQNTFL (235 aa). The TRAM domain maps to 396 to 457; the sequence is RSKIGQKTDV…SNSFVGEMTN (62 aa).

Belongs to the methylthiotransferase family. MiaB subfamily. Monomer. The cofactor is [4Fe-4S] cluster.

Its subcellular location is the cytoplasm. The catalysed reaction is N(6)-dimethylallyladenosine(37) in tRNA + (sulfur carrier)-SH + AH2 + 2 S-adenosyl-L-methionine = 2-methylsulfanyl-N(6)-dimethylallyladenosine(37) in tRNA + (sulfur carrier)-H + 5'-deoxyadenosine + L-methionine + A + S-adenosyl-L-homocysteine + 2 H(+). Catalyzes the methylthiolation of N6-(dimethylallyl)adenosine (i(6)A), leading to the formation of 2-methylthio-N6-(dimethylallyl)adenosine (ms(2)i(6)A) at position 37 in tRNAs that read codons beginning with uridine. This Bartonella tribocorum (strain CIP 105476 / IBS 506) protein is tRNA-2-methylthio-N(6)-dimethylallyladenosine synthase.